Reading from the N-terminus, the 342-residue chain is Ketol-acid reductoisomerase (NADP(+)) (342 aa).

Positions 2–181 constitute a KARI N-terminal Rossmann domain; that stretch reads VKVYYNGDIK…GGARAGVLET (180 aa). Residues 25–28, Arg-48, Ser-52, and 82–85 each bind NADP(+); these read YGSQ and DEQQ. Residue His-107 is part of the active site. Gly-133 provides a ligand contact to NADP(+). Residues 182 to 327 enclose the KARI C-terminal knotted domain; sequence TFKEETETDL…RKLREMMPFV (146 aa). 4 residues coordinate Mg(2+): Asp-190, Glu-194, Glu-226, and Glu-230. Position 251 (Ser-251) interacts with substrate.

The protein belongs to the ketol-acid reductoisomerase family. Mg(2+) is required as a cofactor.

The enzyme catalyses (2R)-2,3-dihydroxy-3-methylbutanoate + NADP(+) = (2S)-2-acetolactate + NADPH + H(+). It carries out the reaction (2R,3R)-2,3-dihydroxy-3-methylpentanoate + NADP(+) = (S)-2-ethyl-2-hydroxy-3-oxobutanoate + NADPH + H(+). Its pathway is amino-acid biosynthesis; L-isoleucine biosynthesis; L-isoleucine from 2-oxobutanoate: step 2/4. It participates in amino-acid biosynthesis; L-valine biosynthesis; L-valine from pyruvate: step 2/4. Involved in the biosynthesis of branched-chain amino acids (BCAA). Catalyzes an alkyl-migration followed by a ketol-acid reduction of (S)-2-acetolactate (S2AL) to yield (R)-2,3-dihydroxy-isovalerate. In the isomerase reaction, S2AL is rearranged via a Mg-dependent methyl migration to produce 3-hydroxy-3-methyl-2-ketobutyrate (HMKB). In the reductase reaction, this 2-ketoacid undergoes a metal-dependent reduction by NADPH to yield (R)-2,3-dihydroxy-isovalerate. This chain is Ketol-acid reductoisomerase (NADP(+)), found in Bacillus subtilis (strain 168).